The primary structure comprises 352 residues: Nuclear receptor subfamily 1 group I member 3 (352 aa).

The segment at residues 8-83 is a DNA-binding region (nuclear receptor); sequence LRNCVVCGDQ…AGMRKDMILS (76 aa). The NR C4-type zinc-finger motif lies at 11–31; sequence CVVCGDQATGYHFNALTCEGC. Thr38 carries the phosphothreonine; by PKC modification. The segment at 47–71 adopts an NR C4-type zinc-finger fold; sequence CPFAGSCEVSKIQRRHCPACRLQKC. One can recognise an NR LBD domain in the interval 109–352; that stretch reads EQEELIQTLL…MMPLLQEICS (244 aa).

The protein belongs to the nuclear hormone receptor family. NR1 subfamily. As to quaternary structure, heterodimer of NR1I3 and RXR. Interacts with PSMC4. Interacts with ECT2. Directly interacts with DNAJC7; this complex may also include HSP90. Interacts with CRY1. Interacts with CRY2 in a ligand-dependent manner. Phosphorylated at Thr-38 by PKC, dephosphorylation of Thr-38 is required for nuclear translocation and activation.

It localises to the nucleus. The protein resides in the cytoplasm. It is found in the cytoskeleton. Binds and transactivates the retinoic acid response elements that control expression of the retinoic acid receptor beta 2 and alcohol dehydrogenase 3 genes. Transactivates both the phenobarbital responsive element module of the human CYP2B6 gene and the CYP3A4 xenobiotic response element. The chain is Nuclear receptor subfamily 1 group I member 3 (NR1I3) from Macaca mulatta (Rhesus macaque).